Consider the following 65-residue polypeptide: Large ribosomal subunit protein bL35 (65 aa).

Residues 1-26 (MPKIKTVRGAAKRFKKTASGGFKRKQ) form a disordered region. Basic residues predominate over residues 10-26 (AAKRFKKTASGGFKRKQ).

It belongs to the bacterial ribosomal protein bL35 family.

The sequence is that of Large ribosomal subunit protein bL35 from Mannheimia succiniciproducens (strain KCTC 0769BP / MBEL55E).